We begin with the raw amino-acid sequence, 348 residues long: Nuclear receptor subfamily 1 group I member 3 (348 aa).

Positions 8 to 83 (PRSCMVCGDR…AGMKKEMILS (76 aa)) form a DNA-binding region, nuclear receptor. An NR C4-type zinc finger spans residues 11-31 (CMVCGDRATGYHFHALTCEGC). Position 38 is a phosphothreonine; by PKC (Thr-38). The segment at 47–71 (CPFAGNCKVNKAQRRHCPACRLQKC) adopts an NR C4-type zinc-finger fold. The NR LBD domain maps to 109-348 (GQQELVQTLL…MMPLLQEICS (240 aa)).

It belongs to the nuclear hormone receptor family. NR1 subfamily. As to quaternary structure, heterodimer of NR1I3 and RXR. Interacts with PSMC4. Interacts with ECT2. Directly interacts with DNAJC7; this complex may also include HSP90. Interacts with CRY1. Interacts with CRY2 in a ligand-dependent manner. Phosphorylated at Thr-38 by PKC, dephosphorylation of Thr-38 is required for nuclear translocation and activation.

Its subcellular location is the nucleus. The protein localises to the cytoplasm. It localises to the cytoskeleton. In terms of biological role, binds and transactivates the retinoic acid response elements that control expression of the retinoic acid receptor beta 2 and alcohol dehydrogenase 3 genes. Transactivates both the phenobarbital responsive element module of the human CYP2B6 gene and the CYP3A4 xenobiotic response element. The sequence is that of Nuclear receptor subfamily 1 group I member 3 (NR1I3) from Callorhinus ursinus (Northern fur seal).